We begin with the raw amino-acid sequence, 437 residues long: Perilipin-2 (437 aa).

Ala-2 bears the N-acetylalanine mark. The residue at position 215 (Ser-215) is a Phosphoserine. Residue Tyr-232 is modified to Phosphotyrosine. The tract at residues 412–437 is disordered; it reads SQNAQDQGAEMDKSSQETQRSEHKTH. Residues 421–437 are compositionally biased toward basic and acidic residues; that stretch reads EMDKSSQETQRSEHKTH.

The protein belongs to the perilipin family. Interacts with IRGC. Acylated; primarily with C14, C16 and C18 fatty acids. Post-translationally, phosphorylation at Tyr-232 by isoform 1 of CHKA (CHKalpha2) promotes dissociation from lipid droplets: dissociation is followed by recruitment of autophagosome machinery to lipid droplets and subsequent lipid droplet lipolysis. In terms of processing, polyubiquitination of Nt-acetylatable A-PLIN2 by MARCHF6 lead to degradation by 26S proteasomes. In terms of tissue distribution, milk lipid globules.

The protein localises to the membrane. It localises to the lipid droplet. Its function is as follows. Structural component of lipid droplets, which is required for the formation and maintenance of lipid storage droplets. This chain is Perilipin-2, found in Homo sapiens (Human).